Consider the following 121-residue polypeptide: Small ribosomal subunit protein uS13 (121 aa).

The interval 91 to 121 (HKRGLPVRGQRTRTNARTRKGPRRAAASLKK) is disordered.

Belongs to the universal ribosomal protein uS13 family. As to quaternary structure, part of the 30S ribosomal subunit. Forms a loose heterodimer with protein S19. Forms two bridges to the 50S subunit in the 70S ribosome.

Located at the top of the head of the 30S subunit, it contacts several helices of the 16S rRNA. In the 70S ribosome it contacts the 23S rRNA (bridge B1a) and protein L5 of the 50S subunit (bridge B1b), connecting the 2 subunits; these bridges are implicated in subunit movement. Contacts the tRNAs in the A and P-sites. This Bordetella petrii (strain ATCC BAA-461 / DSM 12804 / CCUG 43448) protein is Small ribosomal subunit protein uS13.